Consider the following 158-residue polypeptide: RNA pyrophosphohydrolase (158 aa).

Residues 8 to 152 (PYRPCAGVML…KRALYRGLIE (145 aa)) enclose the Nudix hydrolase domain. A Nudix box motif is present at residues 42-63 (GGIDEGEDAEKAAIRELGEETG).

This sequence belongs to the Nudix hydrolase family. RppH subfamily. A divalent metal cation is required as a cofactor.

Its function is as follows. Accelerates the degradation of transcripts by removing pyrophosphate from the 5'-end of triphosphorylated RNA, leading to a more labile monophosphorylated state that can stimulate subsequent ribonuclease cleavage. The chain is RNA pyrophosphohydrolase from Sphingopyxis alaskensis (strain DSM 13593 / LMG 18877 / RB2256) (Sphingomonas alaskensis).